Here is a 259-residue protein sequence, read N- to C-terminus: uncharacterized protein (259 aa).

The region spanning 1–159 (MIEQFFRPDS…TEIIIKDPYR (159 aa)) is the FAD-binding PCMH-type domain.

This is an uncharacterized protein from Escherichia coli O157:H7.